A 240-amino-acid polypeptide reads, in one-letter code: MLKKLCVILFISSITINSHAKNMYDNVDTATSYDSTYYENEGSLVFKMRLGGIFASAKQKGLPTHSSVQPVSVGEIAKNGYGGDASTTIFFNNYLAAELSLGFNVLRTKYTSLAAVAHNYGINNVKLGKHKPIYMIPATLTGQFHIAPYGGIRPYIGIGYHGSYMLTQATGLKIRNGYNAVGQIGVDFYAKDDTLINIDVRQFFLKPKLEYKSNLVGNKKVTSKVKLNPLIVSIGIGFTF.

Positions 1-20 (MLKKLCVILFISSITINSHA) are cleaved as a signal peptide.

This sequence belongs to the OmpW/AlkL family.

It localises to the cell outer membrane. This Rickettsia typhi (strain ATCC VR-144 / Wilmington) protein is Putative outer membrane protein RT0057.